The following is a 95-amino-acid chain: UPF0512 protein H (95 aa).

This sequence belongs to the UPF0512 family.

This is UPF0512 protein H from Dictyostelium discoideum (Social amoeba).